The chain runs to 319 residues: UPF0761 membrane protein PBPRA3489 (319 aa).

A run of 6 helical transmembrane segments spans residues 50–70, 107–127, 143–163, 188–208, 215–235, and 249–269; these read LVPM…FAGL, VGIG…DHAL, FSIY…SIAV, ALPV…VPNL, ALLG…GFAL, and ALAV…IVLL.

This sequence belongs to the UPF0761 family.

It localises to the cell inner membrane. In Photobacterium profundum (strain SS9), this protein is UPF0761 membrane protein PBPRA3489.